The primary structure comprises 344 residues: N-acetyl-gamma-glutamyl-phosphate reductase (344 aa).

The active site involves Cys148.

The protein belongs to the NAGSA dehydrogenase family. Type 1 subfamily.

It localises to the cytoplasm. It catalyses the reaction N-acetyl-L-glutamate 5-semialdehyde + phosphate + NADP(+) = N-acetyl-L-glutamyl 5-phosphate + NADPH + H(+). The protein operates within amino-acid biosynthesis; L-arginine biosynthesis; N(2)-acetyl-L-ornithine from L-glutamate: step 3/4. In terms of biological role, catalyzes the NADPH-dependent reduction of N-acetyl-5-glutamyl phosphate to yield N-acetyl-L-glutamate 5-semialdehyde. In Clostridium botulinum (strain Alaska E43 / Type E3), this protein is N-acetyl-gamma-glutamyl-phosphate reductase.